A 159-amino-acid chain; its full sequence is U1 small nuclear ribonucleoprotein C (159 aa).

The Matrin-type zinc finger occupies 4-36 (FYCDYCDTYLTHDSPSVRKTHCSGRKHKENVKD). The residue at position 8 (Y8) is a Phosphotyrosine. S17 carries the post-translational modification Phosphoserine. K52 carries the N6-acetyllysine modification. Residues 62–96 (IPPAPFSAPPPAGAMIPPPPSLPGPPRPGMMPAPH) form a disordered region. The span at 63–92 (PPAPFSAPPPAGAMIPPPPSLPGPPRPGMM) shows a compositional bias: pro residues.

Belongs to the U1 small nuclear ribonucleoprotein C family. In terms of assembly, component of the U1 snRNP. The U1 snRNP is composed of the U1 snRNA and the 7 core Sm proteins SNRPB, SNRPD1, SNRPD2, SNRPD3, SNRPE, SNRPF and SNRPG that assemble in a heptameric protein ring on the Sm site of the small nuclear RNA to form the core snRNP, and at least 3 U1 snRNP-specific proteins SNRNP70/U1-70K, SNRPA/U1-A and SNRPC/U1-C. SNRPC/U1-C interacts with U1 snRNA and the 5' splice-site region of the pre-mRNA. Interacts (via N-terminus) with TIA1 (via C-terminus); thereby promoting spliceosomal U1 snRNP recruitment to 5' splice sites.

It is found in the nucleus. Its function is as follows. Component of the spliceosomal U1 snRNP, which is essential for recognition of the pre-mRNA 5' splice-site and the subsequent assembly of the spliceosome. SNRPC/U1-C is directly involved in initial 5' splice-site recognition for both constitutive and regulated alternative splicing. The interaction with the 5' splice-site seems to precede base-pairing between the pre-mRNA and the U1 snRNA. Stimulates commitment or early (E) complex formation by stabilizing the base pairing of the 5' end of the U1 snRNA and the 5' splice-site region. This Rattus norvegicus (Rat) protein is U1 small nuclear ribonucleoprotein C.